We begin with the raw amino-acid sequence, 144 residues long: Ribosomal RNA large subunit methyltransferase H (144 aa).

S-adenosyl-L-methionine contacts are provided by residues Leu-63, Gly-92, and Leu-111 to Phe-116.

Belongs to the RNA methyltransferase RlmH family. In terms of assembly, homodimer.

It is found in the cytoplasm. It catalyses the reaction pseudouridine(1915) in 23S rRNA + S-adenosyl-L-methionine = N(3)-methylpseudouridine(1915) in 23S rRNA + S-adenosyl-L-homocysteine + H(+). Functionally, specifically methylates the pseudouridine at position 1915 (m3Psi1915) in 23S rRNA. This Parasynechococcus marenigrum (strain WH8102) protein is Ribosomal RNA large subunit methyltransferase H.